Reading from the N-terminus, the 204-residue chain is dCTP deaminase, dUMP-forming (204 aa).

DCTP-binding positions include 117–122, His-128, Gly-132, Asp-135, 143–145, Gln-163, Tyr-177, Lys-184, and Gln-188; these read RSSLGR and TLE. The active-site Proton donor/acceptor is Glu-145.

Homotrimer. Two trimers assemble into a hexamer by stacking on top of each other. It depends on Mg(2+) as a cofactor.

The enzyme catalyses dCTP + 2 H2O = dUMP + NH4(+) + diphosphate. It participates in pyrimidine metabolism; dUMP biosynthesis; dUMP from dCTP: step 1/1. Its activity is regulated as follows. Inhibited by dTTP. In terms of biological role, bifunctional enzyme that catalyzes both the deamination of dCTP to dUTP and the hydrolysis of dUTP to dUMP without releasing the toxic dUTP intermediate. It also acts as a dUTP diphosphatase with a lower affinity for dUTP than for dCTP. The chain is dCTP deaminase, dUMP-forming from Methanocaldococcus jannaschii (strain ATCC 43067 / DSM 2661 / JAL-1 / JCM 10045 / NBRC 100440) (Methanococcus jannaschii).